We begin with the raw amino-acid sequence, 535 residues long: CTP synthase (535 aa).

Residues Met-1–Leu-267 form an amidoligase domain region. Position 13 (Ser-13) interacts with CTP. Residue Ser-13 coordinates UTP. Residue Ser-14–Ile-19 coordinates ATP. Residue Tyr-54 coordinates L-glutamine. Asp-71 lines the ATP pocket. Residues Asp-71 and Glu-141 each coordinate Mg(2+). CTP is bound by residues Asp-148–Glu-150, Lys-188–Gln-193, and Lys-224. Residues Lys-188–Gln-193 and Lys-224 each bind UTP. Residue Arg-240–Ala-242 coordinates ATP. In terms of domain architecture, Glutamine amidotransferase type-1 spans Lys-292–Ser-534. Residue Gly-354 coordinates L-glutamine. Residue Cys-381 is the Nucleophile; for glutamine hydrolysis of the active site. Residues Leu-382 to Gln-385, Glu-405, and Arg-462 each bind L-glutamine. Active-site residues include His-507 and Glu-509.

Belongs to the CTP synthase family. In terms of assembly, homotetramer.

It catalyses the reaction UTP + L-glutamine + ATP + H2O = CTP + L-glutamate + ADP + phosphate + 2 H(+). It carries out the reaction L-glutamine + H2O = L-glutamate + NH4(+). The enzyme catalyses UTP + NH4(+) + ATP = CTP + ADP + phosphate + 2 H(+). The protein operates within pyrimidine metabolism; CTP biosynthesis via de novo pathway; CTP from UDP: step 2/2. Its activity is regulated as follows. Allosterically activated by GTP, when glutamine is the substrate; GTP has no effect on the reaction when ammonia is the substrate. The allosteric effector GTP functions by stabilizing the protein conformation that binds the tetrahedral intermediate(s) formed during glutamine hydrolysis. Inhibited by the product CTP, via allosteric rather than competitive inhibition. Functionally, catalyzes the ATP-dependent amination of UTP to CTP with either L-glutamine or ammonia as the source of nitrogen. Regulates intracellular CTP levels through interactions with the four ribonucleotide triphosphates. The protein is CTP synthase of Bacillus mycoides (strain KBAB4) (Bacillus weihenstephanensis).